The following is a 385-amino-acid chain: 1-deoxy-D-xylulose 5-phosphate reductoisomerase 1 (385 aa).

NADPH is bound by residues Thr-11, Gly-12, Ser-13, Ile-14, Asn-39, and Asn-122. Lys-123 serves as a coordination point for 1-deoxy-D-xylulose 5-phosphate. Glu-124 serves as a coordination point for NADPH. Asp-148 is a binding site for Mn(2+). Residues Ser-149, Glu-150, Ser-174, and His-197 each coordinate 1-deoxy-D-xylulose 5-phosphate. Glu-150 contacts Mn(2+). Gly-203 is an NADPH binding site. 4 residues coordinate 1-deoxy-D-xylulose 5-phosphate: Ser-210, Asn-215, Lys-216, and Glu-219. Mn(2+) is bound at residue Glu-219.

Belongs to the DXR family. Mg(2+) serves as cofactor. The cofactor is Mn(2+).

The catalysed reaction is 2-C-methyl-D-erythritol 4-phosphate + NADP(+) = 1-deoxy-D-xylulose 5-phosphate + NADPH + H(+). It functions in the pathway isoprenoid biosynthesis; isopentenyl diphosphate biosynthesis via DXP pathway; isopentenyl diphosphate from 1-deoxy-D-xylulose 5-phosphate: step 1/6. Its function is as follows. Catalyzes the NADPH-dependent rearrangement and reduction of 1-deoxy-D-xylulose-5-phosphate (DXP) to 2-C-methyl-D-erythritol 4-phosphate (MEP). This is 1-deoxy-D-xylulose 5-phosphate reductoisomerase 1 from Bacillus cereus (strain ATCC 14579 / DSM 31 / CCUG 7414 / JCM 2152 / NBRC 15305 / NCIMB 9373 / NCTC 2599 / NRRL B-3711).